The sequence spans 340 residues: Chitinase 7 (340 aa).

Positions 1–32 (MIAARAANLQVAMKALALAVLALAYAAATARA) are cleaved as a signal peptide. In terms of domain architecture, Chitin-binding type-1 spans 33-73 (EQCGRQAGGARCPNRLCCSRWGWCGLTDDYCKGGCQSQCRV). Disulfide bonds link Cys35–Cys50, Cys44–Cys56, Cys49–Cys63, Cys67–Cys71, Cys118–Cys173, Cys185–Cys193, and Cys293–Cys323.

Belongs to the glycosyl hydrolase 19 family. Chitinase class I subfamily. Expressed in pistils, stamens and lodicules.

It catalyses the reaction Random endo-hydrolysis of N-acetyl-beta-D-glucosaminide (1-&gt;4)-beta-linkages in chitin and chitodextrins.. In terms of biological role, hydrolyzes chitin and may play a role in defense against fungal pathogens containing chitin. In Oryza sativa subsp. japonica (Rice), this protein is Chitinase 7 (Cht7).